A 324-amino-acid polypeptide reads, in one-letter code: MSLQIGRTERARSPVFVFAHKRQLLHGRCSTIDNANCSTCSMKINSTCTLTALPIAALPGPRTTSHYSTAAANWCYATVAPRARSSTIAASLGTPAPSSSASFRPKLIRTTPVQAAPVAPALMDAAVERLKTGFEKFKTEVYDKKPDFFEPLKAGQAPKYMVFACADSRVCPSVTLGLEPGEAFTIRNIANMVPAYCKNKYAGVGSAIEYAVCALKVEVIVVIGHSRCGGIKALLSLKDGADDSFHFVEDWVRIGFPAKKKVQTECASMPFDDQCTVLEKEAVNVSLQNLLTYPFVKEGVTNGTLKLVGGHYDFVSGKFETWEQ.

The protein belongs to the beta-class carbonic anhydrase family. As to quaternary structure, homohexamer.

The protein localises to the plastid. The protein resides in the chloroplast stroma. It catalyses the reaction hydrogencarbonate + H(+) = CO2 + H2O. Reversible hydration of carbon dioxide. The polypeptide is Carbonic anhydrase, chloroplastic (Hordeum vulgare (Barley)).